The primary structure comprises 706 residues: Sodium- and chloride-dependent glycine transporter 1 (706 aa).

The interval 1–26 (MSGGDTRAAIARPRMAAAHGPVAPSS) is disordered. At 1–108 (MSGGDTRAAI…KRGNWGNQIE (108 aa)) the chain is on the cytoplasmic side. Low complexity predominate over residues 7-18 (RAAIARPRMAAA). Transmembrane regions (helical) follow at residues 109 to 129 (FVLT…FPYL), 136 to 156 (GAFM…LFFM), and 188 to 208 (VSTY…YYFF). At 209-285 (SSMTHVLPWA…LSDDIGNFGE (77 aa)) the chain is on the extracellular side. A run of 9 helical transmembrane segments spans residues 286–306 (VRLP…LCLI), 315–335 (VVYF…VRGV), 360–380 (VWGD…GGLI), 407–427 (SVYA…HLGV), 450–470 (LLPI…LLGL), 506–526 (VAGF…WLLL), 530–550 (YAAS…IMYI), 570–590 (LFFQ…ILVF), and 610–630 (VAIG…YAMF). Topologically, residues 631 to 706 (RLCRTDGDTL…GSSRLQDSRI (76 aa)) are cytoplasmic. A phosphoserine mark is found at Ser673 and Ser698. An essential for interaction with EXOC1 region spans residues 695-706 (SNGSSRLQDSRI).

Belongs to the sodium:neurotransmitter symporter (SNF) (TC 2.A.22) family. SLC6A9 subfamily. As to quaternary structure, interacts with EXOC1; interaction increases the transporter capacity of SLC6A9 probably by promoting its insertion into the cell membrane. Interacts with EXOC3 and EXOC4. In terms of tissue distribution, expressed in the brain, kidney, pancreas, lung, placenta and liver. As to expression, expressed only in the brain.

It is found in the cell membrane. It catalyses the reaction glycine(out) + chloride(out) + 2 Na(+)(out) = glycine(in) + chloride(in) + 2 Na(+)(in). Its activity is regulated as follows. Inhibited by sarcosine. Sodium- and chloride-dependent glycine transporter. Essential for regulating glycine concentrations at inhibitory glycinergic synapses. In terms of biological role, sodium- and chloride-dependent glycine transporter. This chain is Sodium- and chloride-dependent glycine transporter 1 (SLC6A9), found in Homo sapiens (Human).